A 351-amino-acid polypeptide reads, in one-letter code: Formyl peptide receptor-related sequence 1 (351 aa).

Over M1–I27 the chain is Extracellular. N-linked (GlcNAc...) asparagine glycans are attached at residues N4 and N10. The helical transmembrane segment at L28 to V50 threads the bilayer. The Cytoplasmic segment spans residues A51–T61. Residues I62–V83 traverse the membrane as a helical segment. Residues E84–L100 are Extracellular-facing. Residues C98 and C176 are joined by a disulfide bond. A helical membrane pass occupies residues V101–L121. The Cytoplasmic segment spans residues D122–S140. A helical transmembrane segment spans residues L141–L162. Residues F163–R205 lie on the Extracellular side of the membrane. The helical transmembrane segment at F206–T226 threads the bilayer. Residues K227 to V242 are Cytoplasmic-facing. A helical transmembrane segment spans residues L243 to V266. Residues W267–P286 lie on the Extracellular side of the membrane. The chain crosses the membrane as a helical span at residues T287–G306. The Cytoplasmic segment spans residues Q307–I351.

This sequence belongs to the G-protein coupled receptor 1 family. In terms of tissue distribution, expressed exclusively in vomeronasal neurons. Expressed in 0.6 % of a subset of sensory neurons located in the basal layer of the vomeronasal organ. Each neuron appears to express only one receptor gene. Expressed mostly in neutrophils, followed by spleen and lung and expressed at very low levels in heart and liver.

The protein resides in the cell membrane. In terms of biological role, low affinity receptor for N-formyl-methionyl peptides. Receptor for lipoxin A4. May have an olfactory function associated with the identification of pathogens or of pathogenic states. The sequence is that of Formyl peptide receptor-related sequence 1 (Fpr-s1) from Mus musculus (Mouse).